The chain runs to 414 residues: Putative competence-damage inducible protein (414 aa).

The protein belongs to the CinA family.

The protein is Putative competence-damage inducible protein of Listeria monocytogenes serotype 4a (strain HCC23).